An 891-amino-acid chain; its full sequence is MKRLFEKVFGSESEREIKKIDKLADRVEALDEEYKKLSDQALQSKTAELKGRLSQGEALDDILPEAFATMREAAWRVLGMKHYRVQIYGAIILHQGRISEMKTGEGKTLMATLPVYLNALAGKGVHVVTVNDYLAQRDCEWMGKLYEFLGLSVGVIVHGITIEQRRAAYNADVTYGTNNEFGFDYLRDNMVIYQKDMVQREQNYAIVDEVDSILIDEARTPLIISGQGEKSTKLYHIVDQFVKTLKIEDDVSLDEKANSVTLTEDGGTKAEKAFGIENLADMNNMELSHHINQALKARNLMRLDKDYVVKDGEIIIVDDFTGRLMFGRRYSDGLHQAIEAKEGLQIQRESKTLATITFQNYFRMYRKLSGMTGTAKTEEDEFRAIYNMDVVEIPTNRVIVRDDQADGVYKGEQGKFEALAKDIEGRYKKGQPVLVGTISIEKSEELATLLKRKGIPCEVLNAKHHEREAEIVAQAGRKGIITIATNMAGRGTDIILGGNPEFLAKREMKKRGYADELIANATSHHETDDEELQAARKVYNDLLEKFKKETEQEHKDVIEAGGLHIIGTERHESRRIDNQLRGRAGRQGDPGSSKFYISLEDDLMRLFGGDKMLSIVEKMGLEDDEAIEHGMLSRSIENAQKKVEGRNFGIRKHVLQYDDVMNKQREVIYGERKKVLAGESLKDHVLNMARNIINEAVAIYTADAKYPEEWDLVGLGEYLAGIYMQRATLSFDNIEELTVETLQEQIYETSEKLYEAKEEEIEAERMRELERIIVLQVIDTKWMDHIDAMDQLRQGIGLRAIGQIDPVRAYQVEGFDMFNAMINSIQEDTVKYLFNVEPQAKVERKQVAKPIEASHGDGNRKKAPVVKEKEAGRNDPCPCGSGKKYKKCCGE.

Residues Q86, 104–108, and D493 each bind ATP; that span reads GEGKT. Over residues 845–873 the composition is skewed to basic and acidic residues; sequence KQVAKPIEASHGDGNRKKAPVVKEKEAGR. The disordered stretch occupies residues 845-891; the sequence is KQVAKPIEASHGDGNRKKAPVVKEKEAGRNDPCPCGSGKKYKKCCGE. Zn(2+) contacts are provided by C877, C879, C888, and C889.

This sequence belongs to the SecA family. In terms of assembly, monomer and homodimer. Part of the essential Sec protein translocation apparatus which comprises SecA, SecYEG and auxiliary proteins SecDF. Other proteins may also be involved. Zn(2+) serves as cofactor.

Its subcellular location is the cell membrane. It is found in the cytoplasm. The enzyme catalyses ATP + H2O + cellular proteinSide 1 = ADP + phosphate + cellular proteinSide 2.. Part of the Sec protein translocase complex. Interacts with the SecYEG preprotein conducting channel. Has a central role in coupling the hydrolysis of ATP to the transfer of proteins into and across the cell membrane, serving as an ATP-driven molecular motor driving the stepwise translocation of polypeptide chains across the membrane. The polypeptide is Protein translocase subunit SecA 1 (Alkaliphilus metalliredigens (strain QYMF)).